The sequence spans 229 residues: Sugar fermentation stimulation protein homolog (229 aa).

Belongs to the SfsA family.

This chain is Sugar fermentation stimulation protein homolog, found in Clostridium novyi (strain NT).